The chain runs to 204 residues: Proteasome subunit beta type-2-A (204 aa).

Methionine 1 bears the N-acetylmethionine mark.

The protein belongs to the peptidase T1B family. As to quaternary structure, component of the 20S core complex of the 26S proteasome. The 26S proteasome is composed of a core protease (CP), known as the 20S proteasome, capped at one or both ends by the 19S regulatory particle (RP/PA700). The 20S proteasome core is composed of 28 subunits that are arranged in four stacked rings, resulting in a barrel-shaped structure. The two end rings are each formed by seven alpha subunits, and the two central rings are each formed by seven beta subunits. The catalytic chamber with the active sites is on the inside of the barrel.

Its subcellular location is the cytoplasm. It localises to the nucleus. Functionally, non-catalytic component of the proteasome, a multicatalytic proteinase complex which is characterized by its ability to cleave peptides with Arg, Phe, Tyr, Leu, and Glu adjacent to the leaving group at neutral or slightly basic pH. The proteasome has an ATP-dependent proteolytic activity. The polypeptide is Proteasome subunit beta type-2-A (PBD1) (Arabidopsis thaliana (Mouse-ear cress)).